Here is a 96-residue protein sequence, read N- to C-terminus: UPF0235 protein Tola_0962 (96 aa).

Belongs to the UPF0235 family.

In Tolumonas auensis (strain DSM 9187 / NBRC 110442 / TA 4), this protein is UPF0235 protein Tola_0962.